Here is a 349-residue protein sequence, read N- to C-terminus: GTP 3',8-cyclase (349 aa).

The Radical SAM core domain maps to 24–249; it reads PFGRAVTYLR…KDMSYRTGGP (226 aa). Arg33 lines the GTP pocket. Cys40 and Cys44 together coordinate [4Fe-4S] cluster. Residue Tyr46 coordinates S-adenosyl-L-methionine. Residue Cys47 participates in [4Fe-4S] cluster binding. A GTP-binding site is contributed by Arg82. Gly86 contacts S-adenosyl-L-methionine. Thr116 is a binding site for GTP. Ser140 provides a ligand contact to S-adenosyl-L-methionine. Residue Lys176 participates in GTP binding. Position 210 (Met210) interacts with S-adenosyl-L-methionine. Residues Cys273 and Cys276 each coordinate [4Fe-4S] cluster. Position 278–280 (278–280) interacts with GTP; it reads RVR. Cys290 contributes to the [4Fe-4S] cluster binding site.

The protein belongs to the radical SAM superfamily. MoaA family. As to quaternary structure, monomer and homodimer. [4Fe-4S] cluster serves as cofactor.

It catalyses the reaction GTP + AH2 + S-adenosyl-L-methionine = (8S)-3',8-cyclo-7,8-dihydroguanosine 5'-triphosphate + 5'-deoxyadenosine + L-methionine + A + H(+). It participates in cofactor biosynthesis; molybdopterin biosynthesis. Catalyzes the cyclization of GTP to (8S)-3',8-cyclo-7,8-dihydroguanosine 5'-triphosphate. In Sinorhizobium medicae (strain WSM419) (Ensifer medicae), this protein is GTP 3',8-cyclase.